The sequence spans 212 residues: Leucine efflux protein (212 aa).

6 consecutive transmembrane segments (helical) span residues 12-32 (TYLV…LFVL), 49-69 (GVFI…ATLI), 71-91 (TTPI…LYLG), 122-142 (ILSL…VQFI), 153-173 (FFIL…FLII), and 188-208 (LAKV…ARLA).

Belongs to the Rht family.

The protein localises to the cell inner membrane. The enzyme catalyses L-leucine(in) + H(+)(out) = L-leucine(out) + H(+)(in). Exporter of leucine. This is Leucine efflux protein (leuE) from Shigella sonnei (strain Ss046).